We begin with the raw amino-acid sequence, 488 residues long: Bifunctional protein HldE (488 aa).

Residues 1 to 330 are ribokinase; sequence MIDFDGLSNA…RNILPPASLA (330 aa). Residue 205-208 participates in ATP binding; sequence NSKE. D275 is a catalytic residue. The interval 358-488 is cytidylyltransferase; sequence FTNGCFDILH…TSLVKRAGGA (131 aa).

This sequence in the N-terminal section; belongs to the carbohydrate kinase PfkB family. In the C-terminal section; belongs to the cytidylyltransferase family. Homodimer.

It catalyses the reaction D-glycero-beta-D-manno-heptose 7-phosphate + ATP = D-glycero-beta-D-manno-heptose 1,7-bisphosphate + ADP + H(+). The enzyme catalyses D-glycero-beta-D-manno-heptose 1-phosphate + ATP + H(+) = ADP-D-glycero-beta-D-manno-heptose + diphosphate. Its pathway is nucleotide-sugar biosynthesis; ADP-L-glycero-beta-D-manno-heptose biosynthesis; ADP-L-glycero-beta-D-manno-heptose from D-glycero-beta-D-manno-heptose 7-phosphate: step 1/4. It participates in nucleotide-sugar biosynthesis; ADP-L-glycero-beta-D-manno-heptose biosynthesis; ADP-L-glycero-beta-D-manno-heptose from D-glycero-beta-D-manno-heptose 7-phosphate: step 3/4. Functionally, catalyzes the phosphorylation of D-glycero-D-manno-heptose 7-phosphate at the C-1 position to selectively form D-glycero-beta-D-manno-heptose-1,7-bisphosphate. In terms of biological role, catalyzes the ADP transfer from ATP to D-glycero-beta-D-manno-heptose 1-phosphate, yielding ADP-D-glycero-beta-D-manno-heptose. This is Bifunctional protein HldE from Nitrobacter winogradskyi (strain ATCC 25391 / DSM 10237 / CIP 104748 / NCIMB 11846 / Nb-255).